The following is a 274-amino-acid chain: 2,3,4,5-tetrahydropyridine-2,6-dicarboxylate N-succinyltransferase (274 aa).

Arg-104 and Asp-141 together coordinate substrate.

The protein belongs to the transferase hexapeptide repeat family. In terms of assembly, homotrimer.

The protein resides in the cytoplasm. The enzyme catalyses (S)-2,3,4,5-tetrahydrodipicolinate + succinyl-CoA + H2O = (S)-2-succinylamino-6-oxoheptanedioate + CoA. The protein operates within amino-acid biosynthesis; L-lysine biosynthesis via DAP pathway; LL-2,6-diaminopimelate from (S)-tetrahydrodipicolinate (succinylase route): step 1/3. This chain is 2,3,4,5-tetrahydropyridine-2,6-dicarboxylate N-succinyltransferase, found in Enterobacter sp. (strain 638).